Consider the following 506-residue polypeptide: Chromosomal replication initiator protein DnaA (506 aa).

The interval Met-1–Arg-87 is domain I, interacts with DnaA modulators. A domain II region spans residues Arg-87–Ser-169. The tract at residues Asp-135 to Ala-154 is disordered. Over residues Ala-139–Pro-148 the composition is skewed to low complexity. Residues Tyr-170–Ser-386 form a domain III, AAA+ region region. ATP contacts are provided by Gly-214, Gly-216, Lys-217, and Thr-218. Positions His-387 to Thr-506 are domain IV, binds dsDNA.

This sequence belongs to the DnaA family. Oligomerizes as a right-handed, spiral filament on DNA at oriC.

Its subcellular location is the cytoplasm. Plays an essential role in the initiation and regulation of chromosomal replication. ATP-DnaA binds to the origin of replication (oriC) to initiate formation of the DNA replication initiation complex once per cell cycle. Binds the DnaA box (a 9 base pair repeat at the origin) and separates the double-stranded (ds)DNA. Forms a right-handed helical filament on oriC DNA; dsDNA binds to the exterior of the filament while single-stranded (ss)DNA is stabiized in the filament's interior. The ATP-DnaA-oriC complex binds and stabilizes one strand of the AT-rich DNA unwinding element (DUE), permitting loading of DNA polymerase. After initiation quickly degrades to an ADP-DnaA complex that is not apt for DNA replication. Binds acidic phospholipids. Its function is as follows. Non-cooperatively binds DnaA boxes in the minimal plasmid RK2 replication origin (oriV). In vitro in the presence of plasmid RK2-derived TrfA and E.coli protein HU, forms an open complex at oriV. This complex was not however competent for formation of a pre-priming complex with E.coli DnaB and DnaC. Broad host range plasmid RK2 requires not only DnaA for replication but also TrfA and host factors. This Pseudomonas putida (strain ATCC 47054 / DSM 6125 / CFBP 8728 / NCIMB 11950 / KT2440) protein is Chromosomal replication initiator protein DnaA.